Reading from the N-terminus, the 217-residue chain is Thiamine-phosphate synthase (217 aa).

4-amino-2-methyl-5-(diphosphooxymethyl)pyrimidine contacts are provided by residues 37-41 (QFREK) and asparagine 72. 2 residues coordinate Mg(2+): aspartate 73 and aspartate 92. A 4-amino-2-methyl-5-(diphosphooxymethyl)pyrimidine-binding site is contributed by serine 110. 136–138 (TVS) lines the 2-[(2R,5Z)-2-carboxy-4-methylthiazol-5(2H)-ylidene]ethyl phosphate pocket. Lysine 139 contacts 4-amino-2-methyl-5-(diphosphooxymethyl)pyrimidine. Residues glycine 168 and 188 to 189 (IS) contribute to the 2-[(2R,5Z)-2-carboxy-4-methylthiazol-5(2H)-ylidene]ethyl phosphate site.

This sequence belongs to the thiamine-phosphate synthase family. The cofactor is Mg(2+).

It carries out the reaction 2-[(2R,5Z)-2-carboxy-4-methylthiazol-5(2H)-ylidene]ethyl phosphate + 4-amino-2-methyl-5-(diphosphooxymethyl)pyrimidine + 2 H(+) = thiamine phosphate + CO2 + diphosphate. The catalysed reaction is 2-(2-carboxy-4-methylthiazol-5-yl)ethyl phosphate + 4-amino-2-methyl-5-(diphosphooxymethyl)pyrimidine + 2 H(+) = thiamine phosphate + CO2 + diphosphate. The enzyme catalyses 4-methyl-5-(2-phosphooxyethyl)-thiazole + 4-amino-2-methyl-5-(diphosphooxymethyl)pyrimidine + H(+) = thiamine phosphate + diphosphate. The protein operates within cofactor biosynthesis; thiamine diphosphate biosynthesis; thiamine phosphate from 4-amino-2-methyl-5-diphosphomethylpyrimidine and 4-methyl-5-(2-phosphoethyl)-thiazole: step 1/1. Functionally, condenses 4-methyl-5-(beta-hydroxyethyl)thiazole monophosphate (THZ-P) and 2-methyl-4-amino-5-hydroxymethyl pyrimidine pyrophosphate (HMP-PP) to form thiamine monophosphate (TMP). The chain is Thiamine-phosphate synthase from Anoxybacillus flavithermus (strain DSM 21510 / WK1).